We begin with the raw amino-acid sequence, 220 residues long: Probable pterin-4-alpha-carbinolamine dehydratase, chloroplastic (220 aa).

The transit peptide at 1-50 directs the protein to the chloroplast; sequence MAATSSSPPCNISASSLLLRQPSRSILKVFGLLPPVSRNNRKLGRLTVTR.

Belongs to the pterin-4-alpha-carbinolamine dehydratase family. Interacts with SDIR1. Interacts with AIRP2. In terms of processing, ubiquitinated by SDIR1. Ubiquitination leads to its subsequent degradation, thus controlling abscisic acid (ABA) signaling. Ubiquitinated by AIRP2. Ubiquitination leads to its subsequent degradation, thus controlling abscisic acid (ABA) signaling during drought stress.

It localises to the plastid. The protein localises to the chloroplast. Its subcellular location is the cell membrane. The protein resides in the nucleus. The catalysed reaction is (4aS,6R)-4a-hydroxy-L-erythro-5,6,7,8-tetrahydrobiopterin = (6R)-L-erythro-6,7-dihydrobiopterin + H2O. In terms of biological role, involved in tetrahydrobiopterin biosynthesis. Interacts with and acts downstream of the E3 ubiquitin-protein ligase SDIR1 in abscisic acid (ABA) and salt stress signaling. Regulates the expression of the bZIP transcription factor ABI5, which mediates responses to ABA during seed germination and salt stress. The SDIR1-ATP1/SDIRIP1 complex plays an important role in ABA signaling through the ubiquitination pathway. Acts downstream of AIRP2 in regulation of ABA signaling during drought stress. In Arabidopsis thaliana (Mouse-ear cress), this protein is Probable pterin-4-alpha-carbinolamine dehydratase, chloroplastic.